Reading from the N-terminus, the 250-residue chain is 5-oxoprolinase subunit A (250 aa).

The protein belongs to the LamB/PxpA family. In terms of assembly, forms a complex composed of PxpA, PxpB and PxpC.

The enzyme catalyses 5-oxo-L-proline + ATP + 2 H2O = L-glutamate + ADP + phosphate + H(+). In terms of biological role, catalyzes the cleavage of 5-oxoproline to form L-glutamate coupled to the hydrolysis of ATP to ADP and inorganic phosphate. This chain is 5-oxoprolinase subunit A, found in Staphylococcus aureus (strain bovine RF122 / ET3-1).